A 361-amino-acid polypeptide reads, in one-letter code: Phospho-N-acetylmuramoyl-pentapeptide-transferase (361 aa).

10 helical membrane-spanning segments follow: residues 27–47 (GALF…ISLL), 72–92 (TPTM…LLWA), 99–119 (VWVT…DDYL), 135–155 (LALE…YSPA), 169–189 (ALLN…VGAG), 200–220 (GLAI…AYLV), 240–260 (LAVV…FNAP), 264–284 (IFMG…IAVA), 289–309 (IVLA…IIQV), and 338–358 (QVVI…LATL).

Belongs to the glycosyltransferase 4 family. MraY subfamily. It depends on Mg(2+) as a cofactor.

The protein resides in the cell inner membrane. It carries out the reaction UDP-N-acetyl-alpha-D-muramoyl-L-alanyl-gamma-D-glutamyl-meso-2,6-diaminopimeloyl-D-alanyl-D-alanine + di-trans,octa-cis-undecaprenyl phosphate = di-trans,octa-cis-undecaprenyl diphospho-N-acetyl-alpha-D-muramoyl-L-alanyl-D-glutamyl-meso-2,6-diaminopimeloyl-D-alanyl-D-alanine + UMP. It functions in the pathway cell wall biogenesis; peptidoglycan biosynthesis. Functionally, catalyzes the initial step of the lipid cycle reactions in the biosynthesis of the cell wall peptidoglycan: transfers peptidoglycan precursor phospho-MurNAc-pentapeptide from UDP-MurNAc-pentapeptide onto the lipid carrier undecaprenyl phosphate, yielding undecaprenyl-pyrophosphoryl-MurNAc-pentapeptide, known as lipid I. The sequence is that of Phospho-N-acetylmuramoyl-pentapeptide-transferase from Methylobacterium radiotolerans (strain ATCC 27329 / DSM 1819 / JCM 2831 / NBRC 15690 / NCIMB 10815 / 0-1).